Reading from the N-terminus, the 301-residue chain is tRNA dimethylallyltransferase (301 aa).

10–17 lines the ATP pocket; it reads GATATGKT. Residue 12–17 coordinates substrate; sequence TATGKT. Residues 35-38 form an interaction with substrate tRNA region; that stretch reads DSRQ.

Belongs to the IPP transferase family. As to quaternary structure, monomer. Mg(2+) serves as cofactor.

The catalysed reaction is adenosine(37) in tRNA + dimethylallyl diphosphate = N(6)-dimethylallyladenosine(37) in tRNA + diphosphate. In terms of biological role, catalyzes the transfer of a dimethylallyl group onto the adenine at position 37 in tRNAs that read codons beginning with uridine, leading to the formation of N6-(dimethylallyl)adenosine (i(6)A). The chain is tRNA dimethylallyltransferase from Crocosphaera subtropica (strain ATCC 51142 / BH68) (Cyanothece sp. (strain ATCC 51142)).